A 539-amino-acid polypeptide reads, in one-letter code: 3-methylmercaptopropionyl-CoA ligase (539 aa).

Position 185 (threonine 185) interacts with Mg(2+). Residues histidine 231, glycine 303, histidine 324, alanine 325, and serine 329 each contribute to the ATP site. Glutamate 330 provides a ligand contact to Mg(2+). Residues glutamine 359, aspartate 417, arginine 432, and lysine 523 each coordinate ATP.

Belongs to the ATP-dependent AMP-binding enzyme family. In terms of assembly, homodimer. Mg(2+) serves as cofactor.

The catalysed reaction is 3-(methylsulfanyl)propanoate + ATP + CoA = 3-(methylsulfanyl)propanoyl-CoA + AMP + diphosphate. The protein operates within lipid metabolism; fatty acid metabolism. Its activity is regulated as follows. Activated by LiCl and NH(4)Cl. Inhibited by dimethylsulfoniopropionate (DMSP). MMPA concentrations above 2 mM relieve the DMSP inhibition and 80% of activity is regained at an MMPA concentration of 8 mM. Functionally, involved in the assimilation of dimethylsulphoniopropionate (DMSP), an important compound in the fixation of carbon in marine phytoplankton. Catalyzes the ATP-dependent ligation of methylmercaptopropionate (MMPA) and CoA to yield methylmercaptopropionate-CoA (MMPA-CoA). It is also active with short-chain-fatty-acid (carboxylic acids up to six carbons in length). The chain is 3-methylmercaptopropionyl-CoA ligase from Ruegeria pomeroyi (strain ATCC 700808 / DSM 15171 / DSS-3) (Silicibacter pomeroyi).